The primary structure comprises 65 residues: Large ribosomal subunit protein bL35 (65 aa).

It belongs to the bacterial ribosomal protein bL35 family.

The polypeptide is Large ribosomal subunit protein bL35 (Proteus mirabilis (strain HI4320)).